The following is a 207-amino-acid chain: Urease accessory protein UreE (207 aa).

Residues 171–207 (HHGHAHSHSHSHDHDHDHDHDHQHGPGCAHGHGHDHH) form a disordered region. Residues 180 to 194 (HSHDHDHDHDHDHQH) show a composition bias toward basic and acidic residues.

This sequence belongs to the UreE family.

Its subcellular location is the cytoplasm. Its function is as follows. Involved in urease metallocenter assembly. Binds nickel. Probably functions as a nickel donor during metallocenter assembly. In Burkholderia lata (strain ATCC 17760 / DSM 23089 / LMG 22485 / NCIMB 9086 / R18194 / 383), this protein is Urease accessory protein UreE.